A 368-amino-acid chain; its full sequence is Large ribosomal subunit protein mL46 (368 aa).

Residues 53 to 81 are disordered; sequence TATATTTTTLPPPHPPVTTSTGTHAATST. The segment covering 69 to 81 has biased composition (low complexity); it reads VTTSTGTHAATST.

This sequence belongs to the mitochondrion-specific ribosomal protein mL46 family. Component of the mitochondrial large ribosomal subunit (mt-LSU). Mature N.crassa 74S mitochondrial ribosomes consist of a small (37S) and a large (54S) subunit. The 37S small subunit contains a 16S ribosomal RNA (16S mt-rRNA) and 32 different proteins. The 54S large subunit contains a 23S rRNA (23S mt-rRNA) and 42 different proteins.

It localises to the mitochondrion. Functionally, component of the mitochondrial ribosome (mitoribosome), a dedicated translation machinery responsible for the synthesis of mitochondrial genome-encoded proteins, including at least some of the essential transmembrane subunits of the mitochondrial respiratory chain. The mitoribosomes are attached to the mitochondrial inner membrane and translation products are cotranslationally integrated into the membrane. The sequence is that of Large ribosomal subunit protein mL46 (mrpl17) from Neurospora crassa (strain ATCC 24698 / 74-OR23-1A / CBS 708.71 / DSM 1257 / FGSC 987).